We begin with the raw amino-acid sequence, 199 residues long: Holliday junction branch migration complex subunit RuvA (199 aa).

Positions Met-1–Ala-64 are domain I. The interval Ser-65 to Thr-143 is domain II. A flexible linker region spans residues Val-144 to Ala-152. Residues Ala-152–Ala-199 form a domain III region.

It belongs to the RuvA family. In terms of assembly, homotetramer. Forms an RuvA(8)-RuvB(12)-Holliday junction (HJ) complex. HJ DNA is sandwiched between 2 RuvA tetramers; dsDNA enters through RuvA and exits via RuvB. An RuvB hexamer assembles on each DNA strand where it exits the tetramer. Each RuvB hexamer is contacted by two RuvA subunits (via domain III) on 2 adjacent RuvB subunits; this complex drives branch migration. In the full resolvosome a probable DNA-RuvA(4)-RuvB(12)-RuvC(2) complex forms which resolves the HJ.

It localises to the cytoplasm. Its function is as follows. The RuvA-RuvB-RuvC complex processes Holliday junction (HJ) DNA during genetic recombination and DNA repair, while the RuvA-RuvB complex plays an important role in the rescue of blocked DNA replication forks via replication fork reversal (RFR). RuvA specifically binds to HJ cruciform DNA, conferring on it an open structure. The RuvB hexamer acts as an ATP-dependent pump, pulling dsDNA into and through the RuvAB complex. HJ branch migration allows RuvC to scan DNA until it finds its consensus sequence, where it cleaves and resolves the cruciform DNA. This Aromatoleum aromaticum (strain DSM 19018 / LMG 30748 / EbN1) (Azoarcus sp. (strain EbN1)) protein is Holliday junction branch migration complex subunit RuvA.